Reading from the N-terminus, the 243-residue chain is MTTNPKPAYQRILLKLSGEALQGSEGFGIDPTVLDRMAQEVKELVELGVQVGVVIGGGNLFRGAGLAKAGMNRVVGDHMGMLATVMNGLAMRDALHRAYVNARLMSAIPLNGVCDDYSWSDAIRELRQGRVVIFAAGTGNPFFTTDSAACLRGIEIEADVVLKATKVDGVYSADPVANPDAQLYDKLAYNDVLEKELKVMDLAAFTLARDHKMPIRVFNMNKPGALRRVVMGEAEGTLISDVQ.

15–18 (KLSG) serves as a coordination point for ATP. The segment at 23 to 28 (GSEGFG) is involved in allosteric activation by GTP. G57 contributes to the UMP binding site. ATP is bound by residues G58 and R62. Residues D77 and 138 to 145 (TGNPFFTT) contribute to the UMP site. The ATP site is built by T165, Y171, and D174.

This sequence belongs to the UMP kinase family. Homohexamer.

The protein resides in the cytoplasm. The catalysed reaction is UMP + ATP = UDP + ADP. The protein operates within pyrimidine metabolism; CTP biosynthesis via de novo pathway; UDP from UMP (UMPK route): step 1/1. With respect to regulation, allosterically activated by GTP. Inhibited by UTP. Its function is as follows. Catalyzes the reversible phosphorylation of UMP to UDP. The chain is Uridylate kinase from Vibrio cholerae serotype O1 (strain ATCC 39541 / Classical Ogawa 395 / O395).